A 396-amino-acid chain; its full sequence is Alpha-1-antitrypsin (396 aa).

The first 2 residues, 1 to 2, serve as a signal peptide directing secretion; it reads HV. The disordered stretch occupies residues 1-24; the sequence is HVEDPQGDAAQKTDTSHHDQEHST. The span at 14–24 shows a compositional bias: basic and acidic residues; the sequence is DTSHHDQEHST. Position 16 is a phosphoserine (S16). Residues N48, N85, N123, and N249 are each glycosylated (N-linked (GlcNAc...) asparagine). The segment at 351 to 370 is RCL; sequence GAMFLEAIPMSIPPEVKFNK. Position 361 is a phosphoserine (S361).

Belongs to the serpin family. As to quaternary structure, interacts with CELA2A. Interacts with ERGIC3 and LMAN1/ERGIC53. Interacts with PRSS1/Trypsin. As to expression, plasma.

Its subcellular location is the secreted. Its function is as follows. Inhibitor of serine proteases. Its primary target is elastase, but it also has a moderate affinity for plasmin and thrombin. Inhibits trypsin, chymotrypsin and plasminogen activator. This is Alpha-1-antitrypsin (SERPINA1) from Chlorocebus aethiops (Green monkey).